We begin with the raw amino-acid sequence, 364 residues long: BTB/POZ and TAZ domain-containing protein 2 (364 aa).

Positions 34–106 constitute a BTB domain; the sequence is SDVEIVTSDN…LYSSSLTEDE (73 aa). Residues 203–212 carry the Nuclear localization signal motif; the sequence is RKKRRRRHRK. A TAZ-type zinc finger spans residues 215–316; sequence DLYMQLSEAM…PDSCRVPLCR (102 aa). The segment at 327–350 is caM-binding; that stretch reads KMGEDTKWKLLVTRVVSAKAMTSL.

In terms of assembly, interacts with CUL3A. Interacts with GTE11/BET10 through the BTB domain. As to expression, preferentially expressed in young leaves and roots.

It is found in the nucleus. The protein resides in the cytoplasm. It functions in the pathway protein modification; protein ubiquitination. May act as a substrate-specific adapter of an E3 ubiquitin-protein ligase complex (CUL3-RBX1-BTB) which mediates the ubiquitination and subsequent proteasomal degradation of target proteins. Plays a key role as a component of the TAC1-mediated telomerase activation pathway certainly by targeting a telomerase repressor to degradation. Seems to occupy an integral position in a complex signaling network that perceives, integrates, and responds to multiple, and sometimes competing, signals. Enhances responses to auxin in postgermination and vegetative development. Also negatively regulates ABA- and sugar-mediated inhibition of the germination. Essential for female and male gametophyte development. In Arabidopsis thaliana (Mouse-ear cress), this protein is BTB/POZ and TAZ domain-containing protein 2 (BT2).